The sequence spans 368 residues: N-acetylneuraminate epimerase 2 (368 aa).

The N-terminal stretch at 1–19 (MNKTITALAILMASFAANA) is a signal peptide. Kelch repeat units follow at residues 40–84 (TVYI…AFID), 86–137 (NLYV…FVHN), 139–173 (KAYV…KINA), 174–219 (YYFD…VNKG), 222–265 (TWLI…VAGG), 287–336 (ENYQ…LWNN), and 338–367 (LLII…VTVQ). E228 serves as the catalytic Proton acceptor.

It belongs to the NanM family. As to quaternary structure, homodimer.

It localises to the periplasm. It catalyses the reaction N-acetyl-alpha-neuraminate = N-acetyl-beta-neuraminate. Functionally, converts alpha-N-acetylneuranimic acid (Neu5Ac) to the beta-anomer, accelerating the equilibrium between the alpha- and beta-anomers. Probably facilitates sialidase-negative bacteria to compete successfully for limited amounts of extracellular Neu5Ac, which is likely taken up in the beta-anomer. In addition, the rapid removal of sialic acid from solution might be advantageous to the bacterium to damp down host responses. The chain is N-acetylneuraminate epimerase 2 from Escherichia coli O6:H1 (strain CFT073 / ATCC 700928 / UPEC).